The primary structure comprises 201 residues: High mobility group protein homolog 068R (201 aa).

DNA-binding regions (HMG box) lie at residues 70 to 138 (PKRN…ELEK) and 143 to 201 (TPSK…KAAK).

The protein belongs to the IIV-6 401R family.

It localises to the host nucleus. This is High mobility group protein homolog 068R from Invertebrate iridescent virus 3 (IIV-3).